The sequence spans 336 residues: Phenylalanine--tRNA ligase alpha subunit (336 aa).

Glu-251 contacts Mg(2+).

Belongs to the class-II aminoacyl-tRNA synthetase family. Phe-tRNA synthetase alpha subunit type 1 subfamily. Tetramer of two alpha and two beta subunits. Requires Mg(2+) as cofactor.

It localises to the cytoplasm. The enzyme catalyses tRNA(Phe) + L-phenylalanine + ATP = L-phenylalanyl-tRNA(Phe) + AMP + diphosphate + H(+). The chain is Phenylalanine--tRNA ligase alpha subunit from Syntrophobacter fumaroxidans (strain DSM 10017 / MPOB).